Consider the following 721-residue polypeptide: Peroxisomal fatty acid beta-oxidation multifunctional protein AIM1 (721 aa).

The active-site Nucleophile is Glu-116. The active-site Proton acceptor is Glu-136. The Microbody targeting signal signature appears at 719-721 (SKL).

This sequence in the N-terminal section; belongs to the enoyl-CoA hydratase/isomerase family. The protein in the central section; belongs to the 3-hydroxyacyl-CoA dehydrogenase family. As to expression, widely expressed.

It localises to the peroxisome. The enzyme catalyses a (3S)-3-hydroxyacyl-CoA = a (2E)-enoyl-CoA + H2O. It carries out the reaction a 4-saturated-(3S)-3-hydroxyacyl-CoA = a (3E)-enoyl-CoA + H2O. It catalyses the reaction (3S)-3-hydroxybutanoyl-CoA = (2E)-butenoyl-CoA + H2O. The catalysed reaction is (3S)-hydroxyoctanoyl-CoA = (2E)-octenoyl-CoA + H2O. The enzyme catalyses (3S)-3-hydroxydodecanoyl-CoA = (2E)-dodecenoyl-CoA + H2O. It carries out the reaction (3S)-hydroxytetradecanoyl-CoA = (2E)-tetradecenoyl-CoA + H2O. It catalyses the reaction (3S)-hydroxyhexanoyl-CoA = (2E)-hexenoyl-CoA + H2O. The catalysed reaction is a (3Z)-enoyl-CoA = a 4-saturated (2E)-enoyl-CoA. The enzyme catalyses a (3E)-enoyl-CoA = a 4-saturated (2E)-enoyl-CoA. It carries out the reaction (3S)-3-hydroxybutanoyl-CoA = (3R)-3-hydroxybutanoyl-CoA. It catalyses the reaction a (3S)-3-hydroxyacyl-CoA + NAD(+) = a 3-oxoacyl-CoA + NADH + H(+). The catalysed reaction is (3S)-3-hydroxybutanoyl-CoA + NAD(+) = acetoacetyl-CoA + NADH + H(+). The enzyme catalyses (3S)-hydroxyhexanoyl-CoA + NAD(+) = 3-oxohexanoyl-CoA + NADH + H(+). It carries out the reaction (3S)-hydroxyoctanoyl-CoA + NAD(+) = 3-oxooctanoyl-CoA + NADH + H(+). It catalyses the reaction (3S)-3-hydroxydodecanoyl-CoA + NAD(+) = 3-oxododecanoyl-CoA + NADH + H(+). The catalysed reaction is (3S)-hydroxytetradecanoyl-CoA + NAD(+) = 3-oxotetradecanoyl-CoA + NADH + H(+). Its pathway is lipid metabolism; fatty acid beta-oxidation. In terms of biological role, involved in peroxisomal fatty acid beta-oxidation. Required for wound-induced jasmonate biosynthesis. Possesses enoyl-CoA hydratase activity against short chain substrates (C4-C6) and 3-hydroxyacyl-CoA dehydrogenase activity against chains of variable sizes (C6-C16). Possesses cinnamoyl-CoA hydratase activity and is involved in the peroxisomal beta-oxidation pathway for the biosynthesis of benzoic acid (BA). Required for the accumulation in seeds of benzoylated glucosinolates (BGs) and substituted hydroxybenzoylated choline esters, which are BA-containing secondary metabolites. Required for salicylic acid (SA) in seeds. This Arabidopsis thaliana (Mouse-ear cress) protein is Peroxisomal fatty acid beta-oxidation multifunctional protein AIM1 (AIM1).